The primary structure comprises 91 residues: MSRSIKKGPFIDDHLQKKVDQSLESGSRKVIKTWSRRSDISPEMVGLTFAVHNGKKFIPVFVSENMVGHKLGEFSPTRTYYGHSADKKGKR.

Belongs to the universal ribosomal protein uS19 family.

In terms of biological role, protein S19 forms a complex with S13 that binds strongly to the 16S ribosomal RNA. The chain is Small ribosomal subunit protein uS19 from Desulfotalea psychrophila (strain LSv54 / DSM 12343).